A 336-amino-acid polypeptide reads, in one-letter code: Phenylalanine--tRNA ligase alpha subunit (336 aa).

Glu257 provides a ligand contact to Mg(2+).

The protein belongs to the class-II aminoacyl-tRNA synthetase family. Phe-tRNA synthetase alpha subunit type 1 subfamily. Tetramer of two alpha and two beta subunits. Requires Mg(2+) as cofactor.

It is found in the cytoplasm. The enzyme catalyses tRNA(Phe) + L-phenylalanine + ATP = L-phenylalanyl-tRNA(Phe) + AMP + diphosphate + H(+). The chain is Phenylalanine--tRNA ligase alpha subunit from Xanthomonas campestris pv. campestris (strain 8004).